Reading from the N-terminus, the 325-residue chain is GMP reductase (325 aa).

Cysteine 174 functions as the Thioimidate intermediate in the catalytic mechanism. Position 203-226 (203-226 (LIADGGIRTHGDIAKSIRFGASMV)) interacts with NADP(+).

This sequence belongs to the IMPDH/GMPR family. GuaC type 2 subfamily.

It catalyses the reaction IMP + NH4(+) + NADP(+) = GMP + NADPH + 2 H(+). Functionally, catalyzes the irreversible NADPH-dependent deamination of GMP to IMP. It functions in the conversion of nucleobase, nucleoside and nucleotide derivatives of G to A nucleotides, and in maintaining the intracellular balance of A and G nucleotides. The sequence is that of GMP reductase from Staphylococcus aureus (strain JH9).